The following is a 544-amino-acid chain: Chaperonin GroEL (544 aa).

ATP contacts are provided by residues 30–33 (TLGP), lysine 51, 87–91 (DGTTT), glycine 415, and aspartate 495.

Belongs to the chaperonin (HSP60) family. Forms a cylinder of 14 subunits composed of two heptameric rings stacked back-to-back. Interacts with the co-chaperonin GroES.

The protein resides in the cytoplasm. It carries out the reaction ATP + H2O + a folded polypeptide = ADP + phosphate + an unfolded polypeptide.. Together with its co-chaperonin GroES, plays an essential role in assisting protein folding. The GroEL-GroES system forms a nano-cage that allows encapsulation of the non-native substrate proteins and provides a physical environment optimized to promote and accelerate protein folding. The polypeptide is Chaperonin GroEL (Neisseria meningitidis serogroup A / serotype 4A (strain DSM 15465 / Z2491)).